The sequence spans 186 residues: Ribosome maturation factor RimM (186 aa).

The PRC barrel domain maps to 93–166 (PDEYYDHQLM…RAVIDPPPGL (74 aa)). A disordered region spans residues 160–186 (IDPPPGLIDDRAEVDSSDTEAATEADA). Residues 174 to 186 (DSSDTEAATEADA) show a composition bias toward acidic residues.

Belongs to the RimM family. Binds ribosomal protein uS19.

It is found in the cytoplasm. Functionally, an accessory protein needed during the final step in the assembly of 30S ribosomal subunit, possibly for assembly of the head region. Essential for efficient processing of 16S rRNA. May be needed both before and after RbfA during the maturation of 16S rRNA. It has affinity for free ribosomal 30S subunits but not for 70S ribosomes. The chain is Ribosome maturation factor RimM from Streptomyces avermitilis (strain ATCC 31267 / DSM 46492 / JCM 5070 / NBRC 14893 / NCIMB 12804 / NRRL 8165 / MA-4680).